The primary structure comprises 1358 residues: DNA-directed RNA polymerase subunit beta (1358 aa).

This sequence belongs to the RNA polymerase beta chain family. In terms of assembly, the RNAP catalytic core consists of 2 alpha, 1 beta, 1 beta' and 1 omega subunit. When a sigma factor is associated with the core the holoenzyme is formed, which can initiate transcription.

The catalysed reaction is RNA(n) + a ribonucleoside 5'-triphosphate = RNA(n+1) + diphosphate. Functionally, DNA-dependent RNA polymerase catalyzes the transcription of DNA into RNA using the four ribonucleoside triphosphates as substrates. In Francisella philomiragia subsp. philomiragia (strain ATCC 25017 / CCUG 19701 / FSC 153 / O#319-036), this protein is DNA-directed RNA polymerase subunit beta.